The chain runs to 207 residues: Interleukin-6 (207 aa).

The N-terminal stretch at 1–18 is a signal peptide; the sequence is MKFFSIASLGLLLVVATA. The segment at 26 to 47 is disordered; it reads REDGENSVTRNKPTRASSGKTR. A compositionally biased stretch (polar residues) spans 31-44; it reads NSVTRNKPTRASSG. A disulfide bridge links C65 with C71. S74 bears the Phosphoserine mark. Cysteines 94 and 104 form a disulfide.

It belongs to the IL-6 superfamily. Component of a hexamer of two molecules each of IL6, IL6R and IL6ST; first binds to IL6R to associate with the signaling subunit IL6ST. Interacts with IL6R (via the N-terminal ectodomain); this interaction may be affected by IL6R-binding with SORL1, hence decreasing IL6 cis signaling. Interacts with SORL1 (via the N-terminal ectodomain); this interaction leads to IL6 internalization and lysosomal degradation. May form a trimeric complex with the soluble SORL1 ectodomain and soluble IL6R receptor; this interaction might stabilize circulating IL6, hence promoting IL6 trans signaling.

Its subcellular location is the secreted. Functionally, cytokine with a wide variety of biological functions in immunity, tissue regeneration, and metabolism. Binds to IL6R, then the complex associates to the signaling subunit IL6ST/gp130 to trigger the intracellular IL6-signaling pathway. The interaction with the membrane-bound IL6R and IL6ST stimulates 'classic signaling', whereas the binding of IL6 and soluble IL6R to IL6ST stimulates 'trans-signaling'. Alternatively, 'cluster signaling' occurs when membrane-bound IL6:IL6R complexes on transmitter cells activate IL6ST receptors on neighboring receiver cells. IL6 is a potent inducer of the acute phase response. Rapid production of IL6 contributes to host defense during infection and tissue injury, but excessive IL6 synthesis is involved in disease pathology. In the innate immune response, is synthesized by myeloid cells, such as macrophages and dendritic cells, upon recognition of pathogens through toll-like receptors (TLRs) at the site of infection or tissue injury. In the adaptive immune response, is required for the differentiation of B cells into immunoglobulin-secreting cells. Plays a major role in the differentiation of CD4(+) T cell subsets. Essential factor for the development of T follicular helper (Tfh) cells that are required for the induction of germinal-center formation. Required to drive naive CD4(+) T cells to the Th17 lineage. Also required for proliferation of myeloma cells and the survival of plasmablast cells. In terms of biological role, acts as an essential factor in bone homeostasis and on vessels directly or indirectly by induction of VEGF, resulting in increased angiogenesis activity and vascular permeability. Induces, through 'trans-signaling' and synergistically with IL1B and TNF, the production of VEGF. Involved in metabolic controls, is discharged into the bloodstream after muscle contraction increasing lipolysis and improving insulin resistance. 'Trans-signaling' in central nervous system also regulates energy and glucose homeostasis. Mediates, through GLP-1, crosstalk between insulin-sensitive tissues, intestinal L cells and pancreatic islets to adapt to changes in insulin demand. Also acts as a myokine. Plays a protective role during liver injury, being required for maintenance of tissue regeneration. Also has a pivotal role in iron metabolism by regulating HAMP/hepcidin expression upon inflammation or bacterial infection. Through activation of IL6ST-YAP-NOTCH pathway, induces inflammation-induced epithelial regeneration. The chain is Interleukin-6 (IL6) from Marmota monax (Woodchuck).